Reading from the N-terminus, the 292-residue chain is 4-hydroxy-tetrahydrodipicolinate synthase (292 aa).

Residue Thr-45 coordinates pyruvate. Tyr-133 (proton donor/acceptor) is an active-site residue. The active-site Schiff-base intermediate with substrate is the Lys-161. Ile-203 contacts pyruvate.

The protein belongs to the DapA family. In terms of assembly, homotetramer; dimer of dimers.

The protein localises to the cytoplasm. The enzyme catalyses L-aspartate 4-semialdehyde + pyruvate = (2S,4S)-4-hydroxy-2,3,4,5-tetrahydrodipicolinate + H2O + H(+). Its pathway is amino-acid biosynthesis; L-lysine biosynthesis via DAP pathway; (S)-tetrahydrodipicolinate from L-aspartate: step 3/4. Its function is as follows. Catalyzes the condensation of (S)-aspartate-beta-semialdehyde [(S)-ASA] and pyruvate to 4-hydroxy-tetrahydrodipicolinate (HTPA). The protein is 4-hydroxy-tetrahydrodipicolinate synthase of Vibrio vulnificus (strain CMCP6).